The following is a 507-amino-acid chain: MAEEQARHVKNGLECIRALKAEPIGSLAIEEAMAAWSEISDNPGQERATCREEKAGSSGLSKPCLSAIGSTEGGAPRIRGQGPGESDDDAETLGIPPRNLQASSTGLQCHYVYDHSGEAVKGIQDADSIMVQSGLDGDSTLSGGDNESENSDVDIGEPDTEGYAITDRGSAPISMGFRASDVETAEGGEIHELLRLQSRGNNFPKLGKTLNVPPPPDPGRASTSGTPIKKGTDARLASFGTEIASSLTGGATQCARKSPSEPSGPGAPAGNVPECVSNAALIQEWTPESGTTISPRSQNNEEGGDHYDDELFSDVQDIKTALAKIHEDNQKIISKLESLLLLKGEVESIKKQINRQNISISTLEGHLSSIMIAIPGLGKDPNDPTADVEINPDLKPIIGRDSGRALAEVLKKPVASRQLQGMTNGRTSSRGQLLKEFQLKPIGKKMSSAVGFVPDTGPASRSVIRSIIKSSRLEEDRKRYLMTLLDDIKGANDLAKFHQMLMKIIMK.

An interaction with N0 region spans residues Met1–Ala48. Disordered regions lie at residues Ser40–Leu100, Gly134–Tyr163, Asn201–Thr232, Gly250–Pro273, and Trp285–Asp309. Ser86 is modified (phosphoserine). The segment covering Gly134–Asp145 has biased composition (low complexity). Residues Asn146 to Thr160 show a composition bias toward acidic residues. Ser151 is modified (phosphoserine). Low complexity predominate over residues Ser260 to Gly270. Positions Thr286 to Glu301 are enriched in polar residues. Residues Gly304 to Gly376 form a multimerization region. A Ca(2+)-binding site is contributed by Asp314. 2 interaction with the L polymerase regions span residues Ser361–Leu377 and Pro396–Leu410. The tract at residues Gly457–Lys507 is x domain (XD). Residues Ala459–Lys507 form an interaction with the nucleocapsid (N-RNA) region.

Belongs to the morbillivirus P protein family. Homotetramer. Interacts (via multimerization domain and XD domain) with polymerase L; this interaction forms the polymerase L-P complex. Interacts (via N-terminus) with N0 (via Ncore); this interaction allows P to chaperon N0 to avoid N polymerization and non-specific RNA binding before encapsidation. Interacts (via C-terminus) with N-RNA template (via Ntail); this interaction maintains the P/L complex anchored to the nucleocapsid template during the sequential transcription. Interacts (via C-terminus) with protein C this interaction allows C to associate with the ribonucleocapsid. In terms of processing, phosphorylation on serines by host CK2 is necessary for the formation of viral factories.

In terms of biological role, essential cofactor of the RNA polymerase L that plays a central role in the transcription and replication by forming the polymerase complex with RNA polymerase L and recruiting L to the genomic N-RNA template for RNA synthesis. Also plays a central role in the encapsidation of nascent RNA chains by forming the encapsidation complex with the nucleocapsid protein N (N-P complex). Acts as a chaperone for newly synthesized free N protein, so-called N0, allowing encapsidation of nascent RNA chains during replication. The nucleoprotein protein N prevents excessive phosphorylation of P, which leads to down-regulation of viral transcription/ replication. Participates, together with N, in the formation of viral factories (viroplasms), which are large inclusions in the host cytoplasm where replication takes place. The chain is Phosphoprotein (P/V) from Measles virus (strain Edmonston B) (MeV).